Reading from the N-terminus, the 325-residue chain is Cytochrome c biogenesis protein CcsA (325 aa).

Helical transmembrane passes span 14-34, 36-56, 68-88, 97-117, 142-162, 233-253, 260-280, and 294-314; these read TFAI…FPNL, GLPA…AALL, ISNL…IHLL, LVGA…AFTL, VMMV…AFLV, VIGL…VWAN, WSWD…AAYL, and AILA…VNLL.

The protein belongs to the CcmF/CycK/Ccl1/NrfE/CcsA family. In terms of assembly, may interact with ccs1.

The protein resides in the cellular thylakoid membrane. In terms of biological role, required during biogenesis of c-type cytochromes (cytochrome c6 and cytochrome f) at the step of heme attachment. In Synechococcus sp. (strain ATCC 27144 / PCC 6301 / SAUG 1402/1) (Anacystis nidulans), this protein is Cytochrome c biogenesis protein CcsA.